The chain runs to 399 residues: MTDVDESVRRRTAAVSEYRKKLLQHKELESRVRTARENLRGAKKEFNKTEDDLKSLQSVGQIIGEVLRPLDNERLIVKASSGPRYVVGCRSKVDKEKLTSGTRVVLDMTTLTIMRALPREVDPVVYNMLHEDPGNISYSAVGGLGDQIRELRESIELPLMNPELFLRVGIKPPKGVLLYGPPGTGKTLLARAIASNIDANFLKVVSSAIIDKYIGESARLIREMFNYAREHQPCIIFMDEIDAIGGRRFSEGTSADREIQRTLMELLNQLDGFDNLGKVKMIMATNRPDVLDPALLRPGRLDRKIEIPLPNEQSRMDILKIHAAGIAKHGEIDYEAIVKLAEGFNGADLRNICTEAGMFAIRAERDYVIHEDFMKAVRKLSEAKKLESSSHYNADFGKE.

Thr2 is modified (N-acetylthreonine). 180–187 is an ATP binding site; sequence GPPGTGKT. Lys203 participates in a covalent cross-link: Glycyl lysine isopeptide (Lys-Gly) (interchain with G-Cter in ubiquitin).

This sequence belongs to the AAA ATPase family. In terms of assembly, component of the 19S regulatory particle (RP/PA700) base subcomplex of the 26S proteasome. The 26S proteasome is composed of a core protease (CP), known as the 20S proteasome, capped at one or both ends by the 19S regulatory particle (RP/PA700). The RP/PA700 complex is composed of at least 17 different subunits in two subcomplexes, the base and the lid, which form the portions proximal and distal to the 20S proteolytic core, respectively.

It localises to the cytoplasm. The protein resides in the nucleus. The 26S proteasome is involved in the ATP-dependent degradation of ubiquitinated proteins. The regulatory (or ATPase) complex confers ATP dependency and substrate specificity to the 26S complex. The protein is 26S proteasome regulatory subunit 10B homolog A (RPT4A) of Arabidopsis thaliana (Mouse-ear cress).